A 286-amino-acid chain; its full sequence is tRNA (guanine-N(7)-)-methyltransferase (286 aa).

Positions 1–21 (MTNPESTAIDPVAAMGTDHTE) are disordered. The S-adenosyl-L-methionine site is built by Glu-91, Glu-116, Asn-143, and Asp-165. Asp-165 is an active-site residue. Residues Lys-169, Asp-201, and 262-265 (TNFE) contribute to the substrate site.

It belongs to the class I-like SAM-binding methyltransferase superfamily. TrmB family.

The catalysed reaction is guanosine(46) in tRNA + S-adenosyl-L-methionine = N(7)-methylguanosine(46) in tRNA + S-adenosyl-L-homocysteine. Its pathway is tRNA modification; N(7)-methylguanine-tRNA biosynthesis. Catalyzes the formation of N(7)-methylguanine at position 46 (m7G46) in tRNA. This is tRNA (guanine-N(7)-)-methyltransferase from Bifidobacterium longum (strain NCC 2705).